The following is a 2551-amino-acid chain: Probable polyketide synthase 13 (2551 aa).

Residues 10–434 (ENDVAIIGIG…GSNCCLILSQ (425 aa)) form the Ketosynthase family 3 (KS3) domain. Catalysis depends on for beta-ketoacyl synthase activity residues Cys-176, His-317, and His-358. Residues 621–654 (GIEVSFIIGHSLGEIPAAYCSGMINIDTLCYLIY) form an acyl/malonyl transferase region. The For acyl/malonyl transferase activity role is filled by Ser-631. Positions 928–1057 (TDNLGYLNEN…GDFQLSNHSS (130 aa)) are N-terminal hotdog fold. In terms of domain architecture, PKS/mFAS DH spans 928-1226 (TDNLGYLNEN…CTSLTPIKES (299 aa)). His-961 serves as the catalytic Proton acceptor; for dehydratase activity. The tract at residues 1076–1226 (NLTKLSRDEL…CTSLTPIKES (151 aa)) is C-terminal hotdog fold. Residue Asp-1136 is the Proton donor; for dehydratase activity of the active site. The Carrier domain maps to 2465–2542 (DCQTIIKDSF…SSIQYTINSF (78 aa)). Position 2502 is an O-(pantetheine 4'-phosphoryl)serine (Ser-2502).

Pantetheine 4'-phosphate serves as cofactor.

In terms of biological role, probable polyketide synthase. The sequence is that of Probable polyketide synthase 13 (pks13) from Dictyostelium discoideum (Social amoeba).